A 411-amino-acid polypeptide reads, in one-letter code: Peptidase T (411 aa).

His78 is a Zn(2+) binding site. Asp80 is a catalytic residue. Asp140 is a binding site for Zn(2+). The Proton acceptor role is filled by Glu173. Residues Glu174, Asp196, and His379 each contribute to the Zn(2+) site.

This sequence belongs to the peptidase M20B family. Zn(2+) is required as a cofactor.

Its subcellular location is the cytoplasm. The catalysed reaction is Release of the N-terminal residue from a tripeptide.. Cleaves the N-terminal amino acid of tripeptides. The polypeptide is Peptidase T (Yersinia pseudotuberculosis serotype O:1b (strain IP 31758)).